Consider the following 539-residue polypeptide: Membrane protein insertase YidC (539 aa).

Residues 7-27 (IIAIALSFVVLVGWSYLADHM) traverse the membrane as a helical segment. The disordered stretch occupies residues 32–64 (QPAPQAQQEETAPSASQAAPQSASQAAAPAPRA). The next 3 helical transmembrane spans lie at 347-367 (YVGN…LVFW), 418-438 (GGCL…QALL), and 498-518 (IMMF…SGLV).

The protein belongs to the OXA1/ALB3/YidC family. Type 1 subfamily. In terms of assembly, interacts with the Sec translocase complex via SecD. Specifically interacts with transmembrane segments of nascent integral membrane proteins during membrane integration.

It is found in the cell inner membrane. Its function is as follows. Required for the insertion and/or proper folding and/or complex formation of integral membrane proteins into the membrane. Involved in integration of membrane proteins that insert both dependently and independently of the Sec translocase complex, as well as at least some lipoproteins. Aids folding of multispanning membrane proteins. The sequence is that of Membrane protein insertase YidC from Nitratidesulfovibrio vulgaris (strain DSM 19637 / Miyazaki F) (Desulfovibrio vulgaris).